The following is a 431-amino-acid chain: MIRRWLTSRLYDAFLVCAFFVSAPRIFYKVFFHGKYIDSWKIRFGVQKPFVKGEGPLVWFHGASVGEVSLLAPLLNRWREEFPEWRFVVTTCSEAGVHTARRLYESLGATVFVLPLDLSCIIKSVVRKLAPDIVIFSEGDCWLHFLTESKRLGAKAFLINGKLSEHSCKRFSFLKRLGRNYFAPLDLLILQDELYKQRFMQIGISSDKIHVTGNMKTFIESSLATNRRDFWRAKLQISSQDRLIVLGSVHPKDVEVWAEVVSHFHNSSTKILWVPRHLEKLKEHAKLLEKAGILFGLWSQGASFRQYNSLIMDAMGVLKDIYSAADIAFVGGTFDPSVGGHNLLEPLQKEVPLMFGPYIYSQSVLAEKLREKEAGLSVNKETLLDVVTDLLQNEKNRQAYIEKGKSFLKQEENSFQQTWEILKSQITCMKI.

Residues 5 to 27 traverse the membrane as a helical; Signal-anchor segment; the sequence is WLTSRLYDAFLVCAFFVSAPRIF. Glu67 acts as the Proton acceptor in catalysis. Residues 275–276, 315–317, and 342–345 contribute to the CMP site; these read PR, MGV, and NLLE.

Belongs to the glycosyltransferase group 1 family. Glycosyltransferase 30 subfamily.

It localises to the cell inner membrane. It carries out the reaction lipid IVA (E. coli) + CMP-3-deoxy-beta-D-manno-octulosonate = alpha-Kdo-(2-&gt;6)-lipid IVA (E. coli) + CMP + H(+). The enzyme catalyses alpha-Kdo-(2-&gt;6)-lipid IVA (E. coli) + CMP-3-deoxy-beta-D-manno-octulosonate = alpha-Kdo-(2-&gt;4)-alpha-Kdo-(2-&gt;6)-lipid IVA (E. coli) + CMP + H(+). It catalyses the reaction alpha-Kdo-(2-&gt;4)-alpha-Kdo-(2-&gt;6)-lipid IVA (E. coli) + CMP-3-deoxy-beta-D-manno-octulosonate = alpha-Kdo-(2-&gt;8)-alpha-Kdo-(2-&gt;4)-alpha-Kdo-(2-&gt;6)-lipid IVA (E. coli) + CMP + H(+). The protein operates within bacterial outer membrane biogenesis; LPS core biosynthesis. Functionally, involved in lipopolysaccharide (LPS) biosynthesis. Catalyzes the transfer of three 3-deoxy-D-manno-octulosonate (Kdo) residues from CMP-Kdo to lipid IV(A), the tetraacyldisaccharide-1,4'-bisphosphate precursor of lipid A. Thus generates the genus-specific LPS epitope of Chlamydia, composed of the trisaccharide alpha-Kdo-(2-&gt;8)-alpha-Kdo-(2-&gt;4)-alpha-Kdo. This Chlamydia trachomatis serovar A (strain ATCC VR-571B / DSM 19440 / HAR-13) protein is 3-deoxy-D-manno-octulosonic acid transferase (waaA).